Here is a 176-residue protein sequence, read N- to C-terminus: Adenylyl-sulfate kinase (176 aa).

12–19 (GLSGAGKT) is an ATP binding site. Catalysis depends on S86, which acts as the Phosphoserine intermediate.

This sequence belongs to the APS kinase family.

The enzyme catalyses adenosine 5'-phosphosulfate + ATP = 3'-phosphoadenylyl sulfate + ADP + H(+). It functions in the pathway sulfur metabolism; hydrogen sulfide biosynthesis; sulfite from sulfate: step 2/3. Functionally, catalyzes the synthesis of activated sulfate. This Synechococcus sp. (strain JA-3-3Ab) (Cyanobacteria bacterium Yellowstone A-Prime) protein is Adenylyl-sulfate kinase.